The chain runs to 420 residues: Polyketide biosynthesis 3-hydroxy-3-methylglutaryl-ACP synthase PksG (420 aa).

Glu82 (proton donor/acceptor) is an active-site residue. The active-site Acyl-thioester intermediate is the Cys114. The active-site Proton donor/acceptor is the His250.

This sequence belongs to the thiolase-like superfamily. HMG-CoA synthase family.

The protein localises to the cytoplasm. It catalyses the reaction 3-oxobutanoyl-[ACP] + acetyl-[ACP] + H2O = (3S)-hydroxy-3-methylglutaryl-[ACP] + holo-[ACP] + H(+). Its pathway is antibiotic biosynthesis; bacillaene biosynthesis. In terms of biological role, involved in some intermediate steps for the synthesis of the antibiotic polyketide bacillaene which is involved in secondary metabolism. It catalyzes the aldol condensation between the acetyl group attached to the acyl-carrier-protein AcpK (Ac-AcpK) and a beta-ketothioester polyketide intermediate linked to one of the consecutive thiolation domains of PksL. This chain is Polyketide biosynthesis 3-hydroxy-3-methylglutaryl-ACP synthase PksG (pksG), found in Bacillus subtilis (strain 168).